Reading from the N-terminus, the 587-residue chain is Leucine-rich repeat-containing protein 63 (587 aa).

LRR repeat units follow at residues 251-274, 344-367, 368-390, 392-413, 414-436, 437-459, and 487-510; these read QSVIETLVTENGNIESVPKQIPPR, AFQLIYLNLSFNDLHYFPTEILCL, KNLQILKLRNNPIKEIPSEIQQL, FLRIFTIAFNLITVLPIGLFSL, SYLEELDVSYNELTFIPNEIQKL, RSLEKLTVDGNELSFFPHGILKL, and LTQIISLFIVQNKLHKFYDKIPVE.

This chain is Leucine-rich repeat-containing protein 63 (LRRC63), found in Homo sapiens (Human).